The following is a 290-amino-acid chain: Inactive tau-tubulin kinase ttbk-6 (290 aa).

Residues 1–240 (MEDHVLKKLN…FWQVMENEKI (240 aa)) enclose the Protein kinase domain. Disordered stretches follow at residues 244-263 (SKFDWENEEPDMSVPPAAWE) and 268-290 (RYFQSNPLEINGPPTPAEVDFVL).

It belongs to the protein kinase superfamily. CK1 Ser/Thr protein kinase family.

The protein is Inactive tau-tubulin kinase ttbk-6 of Caenorhabditis elegans.